The following is a 408-amino-acid chain: Dicamba O-demethylase 1, ferredoxin reductase component (408 aa).

The FAD site is built by glycine 14, lysine 49, valine 82, arginine 130, aspartate 279, and valine 298.

The protein belongs to the FAD-dependent oxidoreductase family. In terms of assembly, monomer. The dicamba O-demethylase multicomponent enzyme system is composed of an oxygenase component (DdmC) and an electron transfer component formed by a ferredoxin reductase (DdmA1) and a ferredoxin (DdmB). In vitro, dicamba O-demethylase assays in which DdmA2 is substituted for DdmA1 demonstrate that the two enzymes possess nearly identical activities. FAD serves as cofactor.

The catalysed reaction is 2 reduced [2Fe-2S]-[ferredoxin] + NAD(+) + H(+) = 2 oxidized [2Fe-2S]-[ferredoxin] + NADH. Functionally, component of the dicamba O-demethylase multicomponent enzyme system involved in the degradation of the herbicide dicamba. In vitro, catalyzes the transfers of electrons from ferredoxin (DdmB) to NADH. Both NADH and NADPH support enzyme activity, with NADH being markedly more effective than NADPH. In Stenotrophomonas maltophilia (Pseudomonas maltophilia), this protein is Dicamba O-demethylase 1, ferredoxin reductase component.